The chain runs to 341 residues: Methionine import ATP-binding protein MetN 1 (341 aa).

The ABC transporter domain maps to 2 to 241 (IEFRQVSKSF…PKTTIAQNFV (240 aa)). Residue 38–45 (GYSGAGKS) participates in ATP binding.

Belongs to the ABC transporter superfamily. Methionine importer (TC 3.A.1.24) family. In terms of assembly, the complex is composed of two ATP-binding proteins (MetN), two transmembrane proteins (MetI) and a solute-binding protein (MetQ).

It is found in the cell membrane. The catalysed reaction is L-methionine(out) + ATP + H2O = L-methionine(in) + ADP + phosphate + H(+). It carries out the reaction D-methionine(out) + ATP + H2O = D-methionine(in) + ADP + phosphate + H(+). Functionally, part of the ABC transporter complex MetNIQ involved in methionine import. Responsible for energy coupling to the transport system. This chain is Methionine import ATP-binding protein MetN 1, found in Staphylococcus aureus (strain Mu50 / ATCC 700699).